The chain runs to 231 residues: Small ribosomal subunit protein uS3 (231 aa).

The KH type-2 domain occupies 39-107; sequence IRELLHKELK…DVVLNIVEIR (69 aa).

This sequence belongs to the universal ribosomal protein uS3 family. As to quaternary structure, part of the 30S ribosomal subunit. Forms a tight complex with proteins S10 and S14.

Its function is as follows. Binds the lower part of the 30S subunit head. Binds mRNA in the 70S ribosome, positioning it for translation. This chain is Small ribosomal subunit protein uS3, found in Nitrobacter winogradskyi (strain ATCC 25391 / DSM 10237 / CIP 104748 / NCIMB 11846 / Nb-255).